The chain runs to 222 residues: MSRKEKELKEYIEKSLKEFETDDSSMVVEYIFGIISDSSSNDDEKKESISEFLESLTEKDSTSFCNEMLIRHKEIIDDKETENKLKLTNLKLEQELKIKETTQSEINEEEKYENPYHKMSREEQKKRDALLSKYGYDEEDVDENGDIILSDHIEKKKIEDNKIESGLGENLNAKRIADEEKAKREKSKIEHQKKVQRDKEALEKQKRDEEKKKTVKKEKRRL.

Residues 80–111 (ETENKLKLTNLKLEQELKIKETTQSEINEEEK) are a coiled coil. Disordered regions lie at residues 102–126 (TQSEINEEEKYENPYHKMSREEQKK) and 159–222 (EDNK…KRRL). 2 stretches are compositionally biased toward basic and acidic residues: residues 112–126 (YENPYHKMSREEQKK) and 175–212 (RIADEEKAKREKSKIEHQKKVQRDKEALEKQKRDEEKK). Residues 168 to 222 (GENLNAKRIADEEKAKREKSKIEHQKKVQRDKEALEKQKRDEEKKKTVKKEKRRL) adopt a coiled-coil conformation. The segment covering 213–222 (KTVKKEKRRL) has biased composition (basic residues).

It belongs to the CCDC43 family.

This chain is Coiled-coil domain-containing protein 43 homolog, found in Dictyostelium discoideum (Social amoeba).